The primary structure comprises 119 residues: Beta-2-microglobulin (119 aa).

A signal peptide spans 1-20; the sequence is MFRSVALAVLALLFLSGLEA. Residues 25-114 enclose the Ig-like C1-type domain; it reads PKIQVYSRHP…VTLSGPRTVK (90 aa). The cysteines at positions 45 and 100 are disulfide-linked.

Belongs to the beta-2-microglobulin family. As to quaternary structure, heterodimer of an alpha chain and a beta chain. Beta-2-microglobulin is the beta-chain of major histocompatibility complex class I molecules.

It is found in the secreted. Its function is as follows. Component of the class I major histocompatibility complex (MHC). Involved in the presentation of peptide antigens to the immune system. The protein is Beta-2-microglobulin (B2M) of Chlorocebus aethiops (Green monkey).